The following is a 511-amino-acid chain: Glucan endo-1,3-beta-glucosidase 1 (511 aa).

Positions 1-28 (MAFTSMVSTVPVLFFFFTLLLISANSSS) are cleaved as a signal peptide. N-linked (GlcNAc...) asparagine glycosylation occurs at asparagine 109. The active-site Proton donor is the glutamate 137. N-linked (GlcNAc...) asparagine glycans are attached at residues asparagine 192 and asparagine 274. The active-site Nucleophile is glutamate 284. Residues asparagine 374, asparagine 378, asparagine 407, asparagine 473, and asparagine 480 are each glycosylated (N-linked (GlcNAc...) asparagine). Cysteine 382 and cysteine 445 are disulfide-bonded. Residue alanine 485 is the site of GPI-anchor amidated alanine attachment. Positions 486–511 (AGEATSRSLSRGFCVTIMILVTFSIL) are cleaved as a propeptide — removed in mature form.

Belongs to the glycosyl hydrolase 17 family. Contains two additional disulfide bonds.

The protein localises to the cell membrane. It carries out the reaction Hydrolysis of (1-&gt;3)-beta-D-glucosidic linkages in (1-&gt;3)-beta-D-glucans.. The sequence is that of Glucan endo-1,3-beta-glucosidase 1 from Arabidopsis thaliana (Mouse-ear cress).